The chain runs to 1776 residues: TOG array regulator of axonemal microtubules protein 1 (1776 aa).

TOG regions lie at residues 94-311 (EEET…RRLE) and 351-595 (PQEL…MPSS). HEAT repeat units lie at residues 175–212 (AFSLALLPQLVVSLREDNPALRKDALQILHICLRRSSG), 214–246 (VLRTLIQGLESPDARLRASTALLLPILFTPEDL), 250–288 (LDLTEVIISLARKLGDQEMEEESETAFSSLQQIGERLGQ), 344–383 (NLKFEIIPQELHARLLDQEDYKNRTQAVEELKQLLGKFNP), 389–426 (ASLVGFISLLYNLLDDSNFKVVHGTLQVLHLLVIRLGE), 430–465 (QFLGPVIAASVKVLADNKLVIKQEYMKIFLKLMKEV), 466–503 (GPQRVLSLLLENLKHKHSRVREEVVNICICSLLTYPSE), and 505–542 (FDLPKLSFDLAPALVDSKRRVRQAALEAFAVLASSMGS). Disordered regions lie at residues 655-676 (KNKLPWENEQPGVMGENQTSNS), 817-921 (ILPS…RGIN), 970-1000 (HSSLRSLRNSAAKKRAKLSGSSSTSDVDSPD), and 1062-1084 (TRLSSAKKTSHAAEQSPSAGFTR). 3 stretches are compositionally biased toward polar residues: residues 826-836 (PRTSPKHTSPL), 845-855 (DNSISFSNSWP), and 871-892 (LANQKSSDPTGENFQEKTTAVQ). Residues 988-1000 (SGSSSTSDVDSPD) are compositionally biased toward low complexity. Positions 1259–1481 (DIALTEALRL…YIKESVKNLR (223 aa)) are TOG 3. 2 HEAT repeats span residues 1297–1334 (TKLHETTFAVVQEVKNLRSGVSRAAVVCLGDLFTYLKK) and 1338–1375 (QELDSAVRALLHKAGESNTFIREDVDKALKAMVNNVTP). A disordered region spans residues 1493–1536 (ASAKGRRSHPGSVGNTRSSSVSRDAFSSSEREVTEVREVPRKSA). Positions 1509–1520 (RSSSVSRDAFSS) are enriched in low complexity. Residues 1521 to 1533 (SEREVTEVREVPR) are compositionally biased toward basic and acidic residues. Residues 1540 to 1776 (SLESAEYIKV…LLDVTVLSEL (237 aa)) are TOG 4. HEAT repeat units lie at residues 1541 to 1578 (LESAEYIKVITGLLNAKDFRDRINGIKQLLSDTENNQE), 1582 to 1619 (GNIVKIFDAFKSRLHDSNSKVNLVALETMHKMIPLLRD), and 1623 to 1661 (PIINMLIPAIVDNNLNSKNPGIYAAATNVVHALSQHVDN).

The protein belongs to the Crescerin family. In terms of assembly, interacts with ARMC9. Interacts with CCDC66, CEP104 and CSPP1.

It is found in the cell projection. Its subcellular location is the cilium. The protein resides in the cytoplasm. The protein localises to the cytoskeleton. It localises to the cilium axoneme. Functionally, involved in ciliogenesis. It is required for appropriate acetylation and polyglutamylation of ciliary microtubules, and regulation of cilium length. Interacts with microtubules and promotes microtubule polymerization via its HEAT repeat domains, especially those in TOG region 2 and 4. This chain is TOG array regulator of axonemal microtubules protein 1 (Togaram1), found in Mus musculus (Mouse).